We begin with the raw amino-acid sequence, 444 residues long: Mitogen-activated protein kinase mpk-1 (444 aa).

2 stretches are compositionally biased toward polar residues: residues 1–17 (MPTW…TTRN) and 24–56 (GHPQ…HVRQ). The segment at 1–56 (MPTWIPNNLCAQPTTRNAKPPSNGHPQATQQQSAPGSLAYRNSSNIPNGATNHVRQ) is disordered. The 289-residue stretch at 96–384 (YVNLSYIGEG…IEQALAHPYL (289 aa)) folds into the Protein kinase domain. Residues 102-110 (IGEGAYGMV) and K125 each bind ATP. D220 (proton acceptor) is an active-site residue. A Phosphothreonine modification is found at T256. Residues 256–258 (TEY) carry the TXY motif. Position 258 is a phosphotyrosine (Y258).

Belongs to the protein kinase superfamily. CMGC Ser/Thr protein kinase family. MAP kinase subfamily. Isoform a interacts with gck-1 (via N-terminus). Mg(2+) is required as a cofactor. In terms of processing, isoform a is phosphorylated at the pachytene stage during oogenesis and is negatively regulated by gck-1. Isoform b is phosphorylated in proximal oocytes. In terms of tissue distribution, expressed in cells lining the rectum. Isoform a is expressed in nervous system, body wall muscles and posterior intestine. Isoform b expression may be restricted to germline.

It carries out the reaction L-seryl-[protein] + ATP = O-phospho-L-seryl-[protein] + ADP + H(+). The enzyme catalyses L-threonyl-[protein] + ATP = O-phospho-L-threonyl-[protein] + ADP + H(+). With respect to regulation, activated by dual phosphorylation at Thr-256 and Tyr-258. May be inactivated by lip-1-mediated dephosphorylation. Functions in let-60 Ras signaling pathway; acts downstream of lin-45 raf kinase, but before the lin-1 gene product in controlling vulval cell differentiation. Plays a negative role in proximal germline proliferation in the mitotic zone. Required for progression of developing oocytes through the pachytene stage, perhaps acting after efl-1/dpl-1-mediated gene activation and before gld-1 down-regulation. May play a role in global X chromosome reactivation or be indirectly required for progression of germ cells through meiosis to the point where X reactivation occurs. In oocytes, inhibits the activity of the chloride channel clh-3, likely by activating gck-3. Plays a role in response to M.nematophilum-mediated bacterial infection by promoting tail swelling and preventing constipation. Involved in fluid homeostasis. In addition, involved in the up-regulation of lysozyme ilys-3 expression in the intestine in responses to M.nematophilum-mediated bacterial infection. By phosphorylating transcription factor skn-1 (isoform c) may play a role in increasing life span downstream of lin-45, let-60 and mek-2. By up-regulating cep-1 and down-regulating gld-1 expression in the late pachytene stage, plays a role in germline apoptosis in response to DNA damage. Regulates egl-1 expression in response to DNA damage, probably upstream of cep-1. In terms of biological role, suppresses germline tumor formation by preventing the dedifferentiation of secondary spermatocytes probably upstream of rskn-1. The polypeptide is Mitogen-activated protein kinase mpk-1 (mpk-1) (Caenorhabditis elegans).